We begin with the raw amino-acid sequence, 220 residues long: Deoxyribose-phosphate aldolase (220 aa).

The active-site Proton donor/acceptor is the D89. The active-site Schiff-base intermediate with acetaldehyde is K151. Residue K180 is the Proton donor/acceptor of the active site.

It belongs to the DeoC/FbaB aldolase family. DeoC type 1 subfamily.

The protein resides in the cytoplasm. It carries out the reaction 2-deoxy-D-ribose 5-phosphate = D-glyceraldehyde 3-phosphate + acetaldehyde. It participates in carbohydrate degradation; 2-deoxy-D-ribose 1-phosphate degradation; D-glyceraldehyde 3-phosphate and acetaldehyde from 2-deoxy-alpha-D-ribose 1-phosphate: step 2/2. Its function is as follows. Catalyzes a reversible aldol reaction between acetaldehyde and D-glyceraldehyde 3-phosphate to generate 2-deoxy-D-ribose 5-phosphate. The polypeptide is Deoxyribose-phosphate aldolase (Streptococcus uberis (strain ATCC BAA-854 / 0140J)).